We begin with the raw amino-acid sequence, 152 residues long: Small ribosomal subunit protein uS8m (152 aa).

This sequence belongs to the universal ribosomal protein uS8 family.

The protein localises to the mitochondrion. The protein is Small ribosomal subunit protein uS8m (mrps8) of Dictyostelium discoideum (Social amoeba).